The chain runs to 603 residues: Bifunctional 3-dehydroquinate dehydratase/shikimate dehydrogenase, chloroplastic (603 aa).

Residues 1 to 10 (MAASSTNARL) are compositionally biased toward polar residues. The segment at 1-22 (MAASSTNARLTNPPRLLSKPRL) is disordered. The N-terminal 66 residues, 1–66 (MAASSTNARL…VVFSDQRRRR (66 aa)), are a transit peptide targeting the chloroplast. The span at 13-22 (PPRLLSKPRL) shows a compositional bias: low complexity. Positions 96–313 (ICAPVMADSI…QPTIKDLLDL (218 aa)) are 3-dehydroquinate dehydratase. Residues glutamate 124, arginine 126, and arginine 155 each coordinate 3-dehydroshikimate. The Proton acceptor; for 3-dehydroquinate dehydratase activity role is filled by histidine 214. Residues lysine 241, arginine 279, serine 300, and glutamine 304 each contribute to the 3-dehydroshikimate site. The Schiff-base intermediate with substrate; for 3-dehydroquinate dehydratase activity role is filled by lysine 241. A shikimate dehydrogenase region spans residues 328 to 558 (IIGKPVSHSK…VYTPRITRLL (231 aa)). Shikimate contacts are provided by serine 336, serine 338, threonine 381, lysine 385, asparagine 406, and aspartate 423. Catalysis depends on lysine 385, which acts as the For shikimate dehydrogenase activity. Aspartate 423 functions as the For shikimate dehydrogenase activity in the catalytic mechanism. Residues alanine 461, glycine 463, alanine 464, asparagine 483, threonine 485, arginine 488, methionine 525, and alanine 548 each contribute to the NADP(+) site. Tyrosine 550 contacts shikimate. An NADP(+)-binding site is contributed by glycine 571. Residues glutamine 578 and glutamine 582 each coordinate shikimate.

In the N-terminal section; belongs to the type-I 3-dehydroquinase family. It in the C-terminal section; belongs to the shikimate dehydrogenase family. In terms of assembly, monomer.

The protein resides in the plastid. It is found in the chloroplast. The enzyme catalyses 3-dehydroquinate = 3-dehydroshikimate + H2O. It carries out the reaction shikimate + NADP(+) = 3-dehydroshikimate + NADPH + H(+). The protein operates within metabolic intermediate biosynthesis; chorismate biosynthesis; chorismate from D-erythrose 4-phosphate and phosphoenolpyruvate: step 3/7. Its pathway is metabolic intermediate biosynthesis; chorismate biosynthesis; chorismate from D-erythrose 4-phosphate and phosphoenolpyruvate: step 4/7. Functionally, bifunctional dehydroquinate dehydratase-shikimate dehydrogenase enzyme that catalyzes two steps in the chorismate biosynthesis pathway. This Arabidopsis thaliana (Mouse-ear cress) protein is Bifunctional 3-dehydroquinate dehydratase/shikimate dehydrogenase, chloroplastic.